Consider the following 236-residue polypeptide: 2,3,4,5-tetrahydropyridine-2,6-dicarboxylate N-acetyltransferase (236 aa).

This sequence belongs to the transferase hexapeptide repeat family. DapH subfamily.

The catalysed reaction is (S)-2,3,4,5-tetrahydrodipicolinate + acetyl-CoA + H2O = L-2-acetamido-6-oxoheptanedioate + CoA. The protein operates within amino-acid biosynthesis; L-lysine biosynthesis via DAP pathway; LL-2,6-diaminopimelate from (S)-tetrahydrodipicolinate (acetylase route): step 1/3. Catalyzes the transfer of an acetyl group from acetyl-CoA to tetrahydrodipicolinate. This chain is 2,3,4,5-tetrahydropyridine-2,6-dicarboxylate N-acetyltransferase, found in Bacillus licheniformis (strain ATCC 14580 / DSM 13 / JCM 2505 / CCUG 7422 / NBRC 12200 / NCIMB 9375 / NCTC 10341 / NRRL NRS-1264 / Gibson 46).